Reading from the N-terminus, the 66-residue chain is MPKQKTHRASAKRFKRTGNGGLKRFRAYTSHRFHGKSVKQRRQLRKASMVSKGDFKRIRRMVATMK.

Positions 1–16 (MPKQKTHRASAKRFKR) are enriched in basic residues. The interval 1–21 (MPKQKTHRASAKRFKRTGNGG) is disordered.

This sequence belongs to the bacterial ribosomal protein bL35 family.

This Lactococcus lactis subsp. cremoris (strain MG1363) protein is Large ribosomal subunit protein bL35.